A 114-amino-acid polypeptide reads, in one-letter code: Putative membrane protein insertion efficiency factor (114 aa).

The protein belongs to the UPF0161 family.

It is found in the cell inner membrane. In terms of biological role, could be involved in insertion of integral membrane proteins into the membrane. The sequence is that of Putative membrane protein insertion efficiency factor from Wolinella succinogenes (strain ATCC 29543 / DSM 1740 / CCUG 13145 / JCM 31913 / LMG 7466 / NCTC 11488 / FDC 602W) (Vibrio succinogenes).